The primary structure comprises 149 residues: Large ribosomal subunit protein bL9 (149 aa).

It belongs to the bacterial ribosomal protein bL9 family.

Functionally, binds to the 23S rRNA. The polypeptide is Large ribosomal subunit protein bL9 (Fervidobacterium nodosum (strain ATCC 35602 / DSM 5306 / Rt17-B1)).